The primary structure comprises 309 residues: Methionyl-tRNA formyltransferase (309 aa).

A (6S)-5,6,7,8-tetrahydrofolate-binding site is contributed by 109–112 (SLLP).

Belongs to the Fmt family.

The catalysed reaction is L-methionyl-tRNA(fMet) + (6R)-10-formyltetrahydrofolate = N-formyl-L-methionyl-tRNA(fMet) + (6S)-5,6,7,8-tetrahydrofolate + H(+). In terms of biological role, attaches a formyl group to the free amino group of methionyl-tRNA(fMet). The formyl group appears to play a dual role in the initiator identity of N-formylmethionyl-tRNA by promoting its recognition by IF2 and preventing the misappropriation of this tRNA by the elongation apparatus. This chain is Methionyl-tRNA formyltransferase, found in Chloroflexus aggregans (strain MD-66 / DSM 9485).